Consider the following 317-residue polypeptide: L-lactate dehydrogenase (317 aa).

NAD(+) is bound by residues V17, D38, K43, Y69, and 83–84 (GA). Substrate-binding residues include Q86 and R92. Residues S105, 122 to 124 (ATN), and S147 each bind NAD(+). 124–127 (NPVD) contributes to the substrate binding site. 152 to 155 (DTAR) contributes to the substrate binding site. Beta-D-fructose 1,6-bisphosphate is bound by residues R157 and H172. H179 (proton acceptor) is an active-site residue. The residue at position 224 (Y224) is a Phosphotyrosine. T233 provides a ligand contact to substrate.

The protein belongs to the LDH/MDH superfamily. LDH family. As to quaternary structure, homotetramer.

The protein localises to the cytoplasm. It carries out the reaction (S)-lactate + NAD(+) = pyruvate + NADH + H(+). It participates in fermentation; pyruvate fermentation to lactate; (S)-lactate from pyruvate: step 1/1. Allosterically activated by fructose 1,6-bisphosphate (FBP). Functionally, catalyzes the conversion of lactate to pyruvate. The polypeptide is L-lactate dehydrogenase (Geobacillus thermodenitrificans (strain NG80-2)).